A 283-amino-acid chain; its full sequence is Isochorismatase domain-containing protein 1 (283 aa).

It belongs to the isochorismatase family.

The protein is Isochorismatase domain-containing protein 1 (isoc1) of Salmo salar (Atlantic salmon).